The primary structure comprises 70 residues: U2-agatoxin-Ao1l (70 aa).

Positions 1-20 (MRAIISLLLISAMVFSIIEA) are cleaved as a signal peptide. The propeptide occupies 21–34 (VPEEEGLQLSEDER). Intrachain disulfides connect Cys37/Cys53, Cys44/Cys58, and Cys52/Cys68. Leu69 is subject to Leucine amide.

It belongs to the neurotoxin 01 (U2-agtx) family. In terms of tissue distribution, expressed by the venom gland.

It localises to the secreted. Functionally, insect active toxin causing rapid but reversible paralysis in crickets. No activity shown in mammals. Does not show effect on mammalian voltage-gated calcium channels. This Agelena orientalis (Funnel-web spider) protein is U2-agatoxin-Ao1l.